The chain runs to 219 residues: Interleukin-12 subunit alpha (219 aa).

The N-terminal stretch at 1-22 (MCPARSLLLVATLVLLDHLSLA) is a signal peptide. 3 disulfides stabilise this stretch: cysteine 37–cysteine 110, cysteine 64–cysteine 196, and cysteine 85–cysteine 123. N-linked (GlcNAc...) asparagine glycans are attached at residues asparagine 93 and asparagine 107.

Belongs to the IL-6 superfamily. Heterodimer with IL12B; disulfide-linked. This heterodimer is known as interleukin IL-12. Heterodimer with EBI3/IL27B; not disulfide-linked. This heterodimer is known as interleukin IL-35. Interacts with NBR1; this interaction promotes IL-12 secretion.

It is found in the secreted. In terms of biological role, heterodimerizes with IL12B to form the IL-12 cytokine or with EBI3/IL27B to form the IL-35 cytokine. IL-12 is primarily produced by professional antigen-presenting cells (APCs) such as B-cells and dendritic cells (DCs) as well as macrophages and granulocytes and regulates T-cell and natural killer-cell responses, induces the production of interferon-gamma (IFN-gamma), favors the differentiation of T-helper 1 (Th1) cells and is an important link between innate resistance and adaptive immunity. Mechanistically, exerts its biological effects through a receptor composed of IL12R1 and IL12R2 subunits. Binding to the receptor results in the rapid tyrosine phosphorylation of a number of cellular substrates including the JAK family kinases TYK2 and JAK2. In turn, recruited STAT4 gets phosphorylated and translocates to the nucleus where it regulates cytokine/growth factor responsive genes. As part of IL-35, plays essential roles in maintaining the immune homeostasis of the liver microenvironment and also functions as an immune-suppressive cytokine. Mediates biological events through unconventional receptors composed of IL12RB2 and gp130/IL6ST heterodimers or homodimers. Signaling requires the transcription factors STAT1 and STAT4, which form a unique heterodimer that binds to distinct DNA sites. The sequence is that of Interleukin-12 subunit alpha (IL12A) from Homo sapiens (Human).